Here is a 439-residue protein sequence, read N- to C-terminus: MDPLSELQDDLTLDDTSEALNQLKLASIDEKNWPSDEMPDFPKSDDSKSSSPELVTHLKWDDPYYDIARHQIVEVAGDDKYGRKIIVFSACRMPPSHQLDHSKLLGYLKHTLDQYVESDYTLLYLHHGLTSDNKPSLSWLRDAYREFDRKYKKNIKALYIVHPTMFIKTLLILFKPLISFKFGQKIFYVNYLSELSEHVKLEQLGIPRQVLKYDDFLKSTQKSPATAPKPMPPRPPLPNQQFGVSLQHLQEKNPEQEPIPIVLRETVAYLQAHALTTEGIFRRSANTQVVREVQQKYNMGLPVDFDQYNELHLPAVILKTFLRELPEPLLTFDLYPHVVGFLNIDESQRVPATLQVLQTLPEENYQVLRFLTAFLVQISAHSDQNKMTNTNLAVVFGPNLLWAKDAAITLKAINPINTFTKFLLDHQGELFPSPDPSGL.

The residue at position 1 (Met-1) is an N-acetylmethionine. Over residues 28 to 48 (IDEKNWPSDEMPDFPKSDDSK) the composition is skewed to basic and acidic residues. The tract at residues 28 to 52 (IDEKNWPSDEMPDFPKSDDSKSSSP) is disordered. Residues Ser-44, Ser-47, Ser-50, and Ser-51 each carry the phosphoserine modification. The CRAL-TRIO domain occupies 63-218 (PYYDIARHQI…QVLKYDDFLK (156 aa)). A Phosphotyrosine modification is found at Tyr-65. Lys-80 carries the post-translational modification N6-acetyllysine. The short motif at 228 to 238 (PKPMPPRPPLP) is the SH3-binding element. The Rho-GAP domain occupies 244 to 431 (VSLQHLQEKN…FLLDHQGELF (188 aa)).

As to quaternary structure, found in a complex with XPO7, EIF4A1, ARHGAP1, VPS26A, VPS29, VPS35 and SFN. Interacts with BNIPL. In terms of tissue distribution, ubiquitous.

It is found in the cytoplasm. Its function is as follows. GTPase activator for the Rho, Rac and Cdc42 proteins, converting them to the putatively inactive GDP-bound state. Cdc42 seems to be the preferred substrate. The sequence is that of Rho GTPase-activating protein 1 (ARHGAP1) from Homo sapiens (Human).